Consider the following 375-residue polypeptide: Probable aminomethyltransferase (375 aa).

The protein belongs to the GcvT family. In terms of assembly, the glycine cleavage system is composed of four proteins: P, T, L and H.

It catalyses the reaction N(6)-[(R)-S(8)-aminomethyldihydrolipoyl]-L-lysyl-[protein] + (6S)-5,6,7,8-tetrahydrofolate = N(6)-[(R)-dihydrolipoyl]-L-lysyl-[protein] + (6R)-5,10-methylene-5,6,7,8-tetrahydrofolate + NH4(+). Functionally, the glycine cleavage system catalyzes the degradation of glycine. The chain is Probable aminomethyltransferase from Aeropyrum pernix (strain ATCC 700893 / DSM 11879 / JCM 9820 / NBRC 100138 / K1).